The sequence spans 272 residues: 4-hydroxy-tetrahydrodipicolinate reductase (272 aa).

NAD(+) is bound by residues 10-15, glutamate 36, 100-102, and 124-127; these read GAGGRM, GTT, and SGNM. Residue histidine 157 is the Proton donor/acceptor of the active site. Histidine 158 lines the (S)-2,3,4,5-tetrahydrodipicolinate pocket. Lysine 161 (proton donor) is an active-site residue. 167–168 lines the (S)-2,3,4,5-tetrahydrodipicolinate pocket; that stretch reads GT.

Belongs to the DapB family.

The protein localises to the cytoplasm. The catalysed reaction is (S)-2,3,4,5-tetrahydrodipicolinate + NAD(+) + H2O = (2S,4S)-4-hydroxy-2,3,4,5-tetrahydrodipicolinate + NADH + H(+). The enzyme catalyses (S)-2,3,4,5-tetrahydrodipicolinate + NADP(+) + H2O = (2S,4S)-4-hydroxy-2,3,4,5-tetrahydrodipicolinate + NADPH + H(+). The protein operates within amino-acid biosynthesis; L-lysine biosynthesis via DAP pathway; (S)-tetrahydrodipicolinate from L-aspartate: step 4/4. Its function is as follows. Catalyzes the conversion of 4-hydroxy-tetrahydrodipicolinate (HTPA) to tetrahydrodipicolinate. The sequence is that of 4-hydroxy-tetrahydrodipicolinate reductase from Afipia carboxidovorans (strain ATCC 49405 / DSM 1227 / KCTC 32145 / OM5) (Oligotropha carboxidovorans).